The sequence spans 467 residues: Glycogen synthase kinase-3 (467 aa).

Residues 1–20 (MSSKDQILEKDKKETDDNGN) are compositionally biased toward basic and acidic residues. The segment at 1–42 (MSSKDQILEKDKKETDDNGNKKTTTTTSSSSSSSSSSKPRSN) is disordered. Over residues 23 to 37 (TTTTTSSSSSSSSSS) the composition is skewed to low complexity. The 284-residue stretch at 56–339 (YITEGVIGNG…PVEICAHPFF (284 aa)) folds into the Protein kinase domain. ATP contacts are provided by residues 62–70 (IGNGSFGVV) and lysine 85. The active-site Proton acceptor is aspartate 179. Tyrosine 214 and tyrosine 220 each carry phosphotyrosine; by zakA. Residues 400-467 (SSNQSSSSNS…TTTTTTTSNH (68 aa)) form a disordered region.

It belongs to the protein kinase superfamily. CMGC Ser/Thr protein kinase family. GSK-3 subfamily. Requires Mg(2+) as cofactor.

It catalyses the reaction L-seryl-[tau protein] + ATP = O-phospho-L-seryl-[tau protein] + ADP + H(+). The enzyme catalyses L-threonyl-[tau protein] + ATP = O-phospho-L-threonyl-[tau protein] + ADP + H(+). Inhibited by lithium. Lithium inhibition is competitive with respect to magnesium but non-competitive with respect to the peptide substrate. Functionally, during cellular differentiation, may mediate an extracellular cyclic AMP stimulated signal transduction pathway that regulates prespore and prestalk B-cell proportions through inhibition of stalk cell formation and induction of prespore cell differentiation. The cAMP receptor carC appears to activate gskA via the tyrosine kinases zakA and zak2, to stimulate prespore differentiation, while carD appears to negatively regulate gskA, to promote prestalk formation. In Dictyostelium discoideum (Social amoeba), this protein is Glycogen synthase kinase-3 (gskA).